The sequence spans 138 residues: Ribulose bisphosphate carboxylase small subunit (138 aa).

The protein belongs to the RuBisCO small chain family. In terms of assembly, heterohexadecamer of 8 large and 8 small subunits.

It localises to the plastid. The protein resides in the chloroplast. RuBisCO catalyzes two reactions: the carboxylation of D-ribulose 1,5-bisphosphate, the primary event in carbon dioxide fixation, as well as the oxidative fragmentation of the pentose substrate in the photorespiration process. Both reactions occur simultaneously and in competition at the same active site. Although the small subunit is not catalytic it is essential for maximal activity. This Pyropia dentata (Red alga) protein is Ribulose bisphosphate carboxylase small subunit.